Reading from the N-terminus, the 585-residue chain is S-antigen protein (585 aa).

Residues 1 to 23 (MNRILSVTLCLFFIYLYIYKTYG) form the signal peptide. Residues 51 to 585 (NGKGQKYEDL…NSIINMLIGM (535 aa)) form a disordered region. Over residues 59–85 (DLEEEKEGENDDEEDSNSEESNNDEEN) the composition is skewed to acidic residues. The segment covering 96 to 113 (QETHGSEDEVSNGREDKV) has biased composition (basic and acidic residues). A run of 56 repeats spans residues 102 to 109 (EDEVSNGR), 110 to 117 (EDKVSNGG), 118 to 125 (EDEVSNGG), 126 to 133 (EDEVSNGR), 134 to 141 (EDKVSNGG), 142 to 149 (EDEVSNGR), 150 to 157 (EDKVSNGG), 158 to 165 (EDEVSNGR), 166 to 173 (EDKVSNGG), 174 to 181 (EDEVSNGR), 182 to 189 (EDKVSNGG), 190 to 197 (EDEVSNGR), 198 to 205 (EDKVSNGR), 206 to 213 (EDKVSNGG), 214 to 221 (EDEVSNGR), 222 to 229 (EDKVSNGR), 230 to 237 (EDKVSNGG), 238 to 245 (EDEVSNGR), 246 to 253 (EDKVSNGG), 254 to 261 (EDEVSNGR), 262 to 269 (EDKVSNGG), 270 to 277 (EDEVSNGR), 278 to 285 (EDKVSNGR), 286 to 293 (EDEVSNGR), 294 to 301 (EDKVSNGG), 302 to 309 (EDEVSNGR), 310 to 317 (EDKVSNGG), 318 to 325 (EDEVSNGR), 326 to 333 (EDKVSNGR), 334 to 341 (EDKVSNGG), 342 to 349 (EDEVSNGR), 350 to 357 (EDKVSNGG), 358 to 365 (EDEVSNGR), 366 to 373 (EDKVSNGR), 374 to 381 (EDKVSNGR), 382 to 389 (EDEVSNGR), 390 to 397 (EDKVSNGG), 398 to 405 (EDEVSNGR), 406 to 413 (EDKVSNGR), 414 to 421 (EDKVSNGG), 422 to 429 (EDEVSNGR), 430 to 437 (EDKVSNGG), 438 to 445 (EDEVSNGR), 446 to 453 (EDKVSNGR), 454 to 461 (EDKVSNGR), 462 to 469 (EDKVSNGG), 470 to 477 (EDEVSNGG), 478 to 485 (EDEVSNGR), 486 to 493 (EDKVSNGG), 494 to 501 (EDEVSNGR), 502 to 509 (EDKVSNGG), 510 to 517 (EDEVSNGR), 518 to 525 (EDKVSNGG), 526 to 533 (EDEVSNGR), 534 to 541 (EDKVSNGR), and 542 to 549 (EDEVSNGR). Positions 102 to 549 (EDEVSNGRED…GREDEVSNGR (448 aa)) are 56 X 8 AA tandem repeats of E-D-[EK]-V-S-N-G-[RG]. Acidic residues predominate over residues 117-129 (GEDEVSNGGEDEV). 2 stretches are compositionally biased toward basic and acidic residues: residues 194–209 (SNGR…EDKV) and 218–233 (SNGR…EDKV). Positions 274–297 (SNGREDKVSNGREDEVSNGREDKV) are enriched in basic and acidic residues. Over residues 322–337 (SNGREDKVSNGREDKV) the composition is skewed to basic and acidic residues. Composition is skewed to basic and acidic residues over residues 362–393 (SNGR…EDKV) and 402–417 (SNGR…EDKV). Basic and acidic residues predominate over residues 442–465 (SNGREDKVSNGREDKVSNGREDKV). The segment covering 469–481 (GEDEVSNGGEDEV) has biased composition (acidic residues). Composition is skewed to basic and acidic residues over residues 530 to 553 (SNGR…EDKG) and 560 to 569 (ELSHNSESHT). A compositionally biased stretch (low complexity) spans 576 to 585 (NSIINMLIGM).

It is found in the parasitophorous vacuole. Its function is as follows. S antigens are soluble heat-stable proteins present in the sera of some infected individuals. The sequence is that of S-antigen protein from Plasmodium falciparum (isolate 3D7).